A 231-amino-acid polypeptide reads, in one-letter code: PIAGSMVLAAILLKLGGYGMIRMMQILPTTKTDMFMPFIVLALWGAILANLTCLQQTDLKSLIAYSSISHMGLVVAAIIIQTPWGLSGAMALMIAHGFTSSALFCLANTTYERTHTRILIMTRGFHNILPMTTTWWLLANLMNIAIPPSMNFTGEFLIMSALFNWAPTTIILLGLSMLITASYSLHMFLSTQMGPTQLNNQTEPTHSREHLLMTLHLIPLMMISMKPELIT.

The next 6 membrane-spanning stretches (helical) occupy residues 1 to 21 (PIAG…YGMI), 34 to 54 (MFMP…LTCL), 63 to 85 (IAYS…TPWG), 89 to 111 (AMAL…NTTY), 128 to 148 (ILPM…AIPP), and 156 to 176 (FLIM…LGLS).

This sequence belongs to the complex I subunit 4 family.

Its subcellular location is the mitochondrion membrane. It catalyses the reaction a ubiquinone + NADH + 5 H(+)(in) = a ubiquinol + NAD(+) + 4 H(+)(out). Core subunit of the mitochondrial membrane respiratory chain NADH dehydrogenase (Complex I) that is believed to belong to the minimal assembly required for catalysis. Complex I functions in the transfer of electrons from NADH to the respiratory chain. The immediate electron acceptor for the enzyme is believed to be ubiquinone. The chain is NADH-ubiquinone oxidoreductase chain 4 (MT-ND4) from Bothriechis schlegelii (Eyelash palm pitviper).